We begin with the raw amino-acid sequence, 323 residues long: Breast cancer metastasis-suppressor 1-like protein (323 aa).

Residues 1 to 15 (MPVHSREKKENNHDE) show a composition bias toward basic and acidic residues. Residues 1–56 (MPVHSREKKENNHDEMEVDYGENEGSTSEEEETESSSVSEEGDSSEMDDEDCERRR) form a disordered region. Positions 16–51 (MEVDYGENEGSTSEEEETESSSVSEEGDSSEMDDED) are enriched in acidic residues. Coiled coils occupy residues 50–82 (EDCE…KERL) and 147–178 (EKLL…ITSE).

This sequence belongs to the BRMS1 family.

Its subcellular location is the nucleus. Involved in the histone deacetylase (HDAC1)-dependent transcriptional repression activity. The protein is Breast cancer metastasis-suppressor 1-like protein (BRMS1L) of Gallus gallus (Chicken).